A 599-amino-acid polypeptide reads, in one-letter code: Adenine deaminase (599 aa).

This sequence belongs to the metallo-dependent hydrolases superfamily. Adenine deaminase family. The cofactor is Mn(2+).

The enzyme catalyses adenine + H2O + H(+) = hypoxanthine + NH4(+). The protein is Adenine deaminase of Clostridium botulinum (strain Langeland / NCTC 10281 / Type F).